Here is a 451-residue protein sequence, read N- to C-terminus: ATP synthase subunit beta (451 aa).

143 to 150 lines the ATP pocket; it reads GGAGVGKT.

This sequence belongs to the ATPase alpha/beta chains family. As to quaternary structure, F-type ATPases have 2 components, CF(1) - the catalytic core - and CF(0) - the membrane proton channel. CF(1) has five subunits: alpha(3), beta(3), gamma(1), delta(1), epsilon(1). CF(0) has three main subunits: a(1), b(2) and c(9-12). The alpha and beta chains form an alternating ring which encloses part of the gamma chain. CF(1) is attached to CF(0) by a central stalk formed by the gamma and epsilon chains, while a peripheral stalk is formed by the delta and b chains.

The protein localises to the cell membrane. It catalyses the reaction ATP + H2O + 4 H(+)(in) = ADP + phosphate + 5 H(+)(out). In terms of biological role, produces ATP from ADP in the presence of a proton gradient across the membrane. The catalytic sites are hosted primarily by the beta subunits. The sequence is that of ATP synthase subunit beta from Coprothermobacter proteolyticus (strain ATCC 35245 / DSM 5265 / OCM 4 / BT).